The primary structure comprises 474 residues: C6 finger domain transcription factor aclZ (474 aa).

The zn(2)-C6 fungal-type DNA-binding region spans 42–69 (CNQCHAAKVRCSGERTGCDRCNNLQYQC). 2 disordered regions span residues 85–148 (RGNK…SHSA) and 177–206 (MSSD…DSHT). The segment covering 90–105 (VRTTTEALQRPATAST) has biased composition (polar residues). Basic and acidic residues predominate over residues 117 to 138 (TDQRSENDPLSRSDFGEQDAAH).

The protein resides in the nucleus. Its function is as follows. Transcription factor that specifically regulates the gene cluster that mediates the biosynthesis of aspirochlorine (or antibiotic A30641), an unusual halogenated spiro compound with distinctive antifungal properties due to selective inhibition of protein biosynthesis, and which is also active against bacteria, viruses, and murine tumor cells. The polypeptide is C6 finger domain transcription factor aclZ (Aspergillus oryzae (strain ATCC 42149 / RIB 40) (Yellow koji mold)).